The primary structure comprises 191 residues: Endoribonuclease YbeY (191 aa).

H122, H126, and H132 together coordinate Zn(2+). Residues 164-191 (QPKPSGPKAFPDAAERAELDKEVPGGGI) form a disordered region. Residues 176–191 (AAERAELDKEVPGGGI) are compositionally biased toward basic and acidic residues.

This sequence belongs to the endoribonuclease YbeY family. Requires Zn(2+) as cofactor.

Its subcellular location is the cytoplasm. Functionally, single strand-specific metallo-endoribonuclease involved in late-stage 70S ribosome quality control and in maturation of the 3' terminus of the 16S rRNA. The chain is Endoribonuclease YbeY from Corynebacterium aurimucosum (strain ATCC 700975 / DSM 44827 / CIP 107346 / CN-1) (Corynebacterium nigricans).